Reading from the N-terminus, the 943-residue chain is Isoleucine--tRNA ligase (943 aa).

The short motif at 58 to 68 is the 'HIGH' region element; it reads PYANGTIHIGH. Glu-567 provides a ligand contact to L-isoleucyl-5'-AMP. The 'KMSKS' region signature appears at 608–612; it reads KMSKS. Lys-611 is an ATP binding site. 4 residues coordinate Zn(2+): Cys-906, Cys-909, Cys-926, and Cys-929.

Belongs to the class-I aminoacyl-tRNA synthetase family. IleS type 1 subfamily. Monomer. Zn(2+) serves as cofactor.

It localises to the cytoplasm. The catalysed reaction is tRNA(Ile) + L-isoleucine + ATP = L-isoleucyl-tRNA(Ile) + AMP + diphosphate. Catalyzes the attachment of isoleucine to tRNA(Ile). As IleRS can inadvertently accommodate and process structurally similar amino acids such as valine, to avoid such errors it has two additional distinct tRNA(Ile)-dependent editing activities. One activity is designated as 'pretransfer' editing and involves the hydrolysis of activated Val-AMP. The other activity is designated 'posttransfer' editing and involves deacylation of mischarged Val-tRNA(Ile). The polypeptide is Isoleucine--tRNA ligase (Pseudomonas fluorescens (strain Pf0-1)).